The primary structure comprises 320 residues: Malate dehydrogenase (320 aa).

NAD(+) is bound by residues 10-15 (GSGMIG) and Asp34. Residues Arg83 and Arg89 each coordinate substrate. Residues Asn96 and 119-121 (ITN) contribute to the NAD(+) site. Substrate is bound by residues Asn121 and Arg152. Catalysis depends on His176, which acts as the Proton acceptor.

Belongs to the LDH/MDH superfamily. MDH type 3 family.

The catalysed reaction is (S)-malate + NAD(+) = oxaloacetate + NADH + H(+). Its function is as follows. Catalyzes the reversible oxidation of malate to oxaloacetate. This chain is Malate dehydrogenase, found in Bartonella henselae (strain ATCC 49882 / DSM 28221 / CCUG 30454 / Houston 1) (Rochalimaea henselae).